The primary structure comprises 553 residues: Arginine--tRNA ligase (553 aa).

The short motif at 130–140 is the 'HIGH' region element; sequence ANPTGDLHIGH.

Belongs to the class-I aminoacyl-tRNA synthetase family. Monomer.

The protein localises to the cytoplasm. The enzyme catalyses tRNA(Arg) + L-arginine + ATP = L-arginyl-tRNA(Arg) + AMP + diphosphate. This Staphylococcus epidermidis (strain ATCC 12228 / FDA PCI 1200) protein is Arginine--tRNA ligase.